A 1032-amino-acid polypeptide reads, in one-letter code: Connector enhancer of kinase suppressor of ras 2 (1032 aa).

One can recognise an SAM domain in the interval 11 to 76 (WSPSQVVDWM…LEAVDLLCAL (66 aa)). Ser12 is subject to Phosphoserine. The region spanning 84–178 (NLKTLSHKLN…TIVQQDCTVY (95 aa)) is the CRIC domain. A PDZ domain is found at 215–297 (VIQLANIKPS…GVILTLKKRP (83 aa)). The DUF1170 domain maps to 302 to 515 (TSAPALLKNM…PAHYSLLPSL (214 aa)). The span at 324 to 340 (RSPTSSVATPSSTISTP) shows a compositional bias: low complexity. The segment at 324–349 (RSPTSSVATPSSTISTPTKRDSSALQ) is disordered. A phosphoserine mark is found at Ser338 and Ser390. 2 disordered regions span residues 480–509 (EEYMFQRNSKKDTGKKSKKKGDKSNSPAHY) and 538–558 (FQQSSLQHKSKKKNKGAISGK). Over residues 545-558 (HKSKKKNKGAISGK) the composition is skewed to basic residues. The PH domain maps to 570–669 (RGDCEGWLWK…WLNRINMLTA (100 aa)). Positions 682-766 (DYWSESDKEE…PIRKTASQRR (85 aa)) are disordered. Tyr683 is subject to Phosphotyrosine. Residues 683–693 (YWSESDKEEAD) are compositionally biased toward acidic residues. Phosphoserine is present on residues Ser685 and Ser687. Residues 701 to 714 (DSPPPPYDTYPRPP) show a composition bias toward pro residues. The segment covering 730–740 (LSSTETSQSQS) has biased composition (low complexity). Phosphoserine occurs at positions 756 and 767. A disordered region spans residues 864–900 (ACDPQDDIQPPEVEEEEEEEEEEAAGENVGEKNENRE). Positions 874 to 917 (PEVEEEEEEEEEEAAGENVGEKNENREEKLGDSLQDLYRALEEA) form a coiled coil. The segment covering 875-888 (EVEEEEEEEEEEAA) has biased composition (acidic residues). Ser906 carries the post-translational modification Phosphoserine.

The protein belongs to the CNKSR family. Interacts with RAF1, RAB2L and RAL GTPase proteins. Post-translationally, phosphorylated on tyrosine.

The protein resides in the cytoplasm. Its subcellular location is the membrane. In terms of biological role, may function as an adapter protein or regulator of Ras signaling pathways. The polypeptide is Connector enhancer of kinase suppressor of ras 2 (Cnksr2) (Mus musculus (Mouse)).